Consider the following 701-residue polypeptide: DNA ligase (701 aa).

NAD(+)-binding positions include 43–47 (DADYD), 92–93 (SL), and Glu-126. Lys-128 (N6-AMP-lysine intermediate) is an active-site residue. The NAD(+) site is built by Arg-149, Glu-186, Lys-302, and Lys-326. Cys-417, Cys-420, Cys-440, and Cys-446 together coordinate Zn(2+). Residues 622 to 701 (ETGSPVTGKT…DEWLALIGET (80 aa)) enclose the BRCT domain.

The protein belongs to the NAD-dependent DNA ligase family. LigA subfamily. The cofactor is Mg(2+). Mn(2+) is required as a cofactor.

It carries out the reaction NAD(+) + (deoxyribonucleotide)n-3'-hydroxyl + 5'-phospho-(deoxyribonucleotide)m = (deoxyribonucleotide)n+m + AMP + beta-nicotinamide D-nucleotide.. DNA ligase that catalyzes the formation of phosphodiester linkages between 5'-phosphoryl and 3'-hydroxyl groups in double-stranded DNA using NAD as a coenzyme and as the energy source for the reaction. It is essential for DNA replication and repair of damaged DNA. The chain is DNA ligase from Hyphomonas neptunium (strain ATCC 15444).